Reading from the N-terminus, the 670-residue chain is Alpha-1,4-glucan:maltose-1-phosphate maltosyltransferase (670 aa).

Positions 262, 322, and 357 each coordinate alpha-maltose 1-phosphate. Asp-393 acts as the Nucleophile in catalysis. Alpha-maltose 1-phosphate is bound at residue Asn-394. Glu-422 functions as the Proton donor in the catalytic mechanism. Position 534–535 (534–535 (KY)) interacts with alpha-maltose 1-phosphate.

Belongs to the glycosyl hydrolase 13 family. GlgE subfamily. In terms of assembly, homodimer.

It carries out the reaction alpha-maltose 1-phosphate + [(1-&gt;4)-alpha-D-glucosyl](n) = [(1-&gt;4)-alpha-D-glucosyl](n+2) + phosphate. In terms of biological role, maltosyltransferase that uses maltose 1-phosphate (M1P) as the sugar donor to elongate linear or branched alpha-(1-&gt;4)-glucans. Is involved in a branched alpha-glucan biosynthetic pathway from trehalose, together with TreS, Mak and GlgB. This chain is Alpha-1,4-glucan:maltose-1-phosphate maltosyltransferase, found in Chlorobaculum tepidum (strain ATCC 49652 / DSM 12025 / NBRC 103806 / TLS) (Chlorobium tepidum).